The primary structure comprises 1125 residues: MASEEASLRALESLMTEFFHDCTTNERKREIEELLNNFAQQIGAWRFCLYFLSSTRNDYVMMYSLTVFENLINKMWLGVPSQDKMEIRSCLPKLLLAHHKTLPYFIRNKLCKVIVDIGRQDWPMFYHDFFTNILQLIQSPVTTPLGLIMLKTTSEELACPREDLSVARKEELRKLLLDQVQTVLGLLTGILETVWDKHSVTAATPPPSPTSGESGDLLSNLLQSPSSAKLLNQPIPILDVESEYICSLALECLAHLFSWIPLSASITPSLLTTIFHFARFGCDIRARKMASVNGSSQNCVSGQERGRLGVLAMSCINELMSKNCVPMEFEEYLLRMFQQTFYLLQKITKDNNAHTVKSRLEELDESYIEKFTDFLRLFVSVHLRRIESYSQFPVVEFLTLLFKYTFHQPTHEGYFSCLDIWTLFLDYLTSKIKSRLGDKEAVLNRYEDALVLLLTEVLNRIQFRYNQAQLEELDDETLDDDQQTEWQRYLRQSLEVVAKVMELLPTHAFSTLFPVLQDNLEVYLGLQQFIVTSGSGHRLNITAENDCRRLHCSLRDLSSLLQAVGRLAEYFIGDVFAARFNDALTVVERLVKVTLYGSQIKLYNIETAVPSVLKPDLIDVHAQSLAALQAYSHWLAQYCSEVHRQNTQQFVTLISTTMDAITPLISTKVQDKLLLSACHLLVSLATTVRPVFLISIPAVQKVFNRITDASALRLVDKAQVLVCRALSNILLLPWPNLPENEQQWPVRSINHASLISALSRDYRNLKPSAVAPQRKMPLDDTKLIIHQTLSVLEDIVENISGESTKSRQICYQSLQESVQVSLALFPAFIHQSDVTDEMLSFFLTLFRGLRVQMGVPFTEQIIQTFLNMFTREQLAESILHEGSTGCRVVEKFLKILQVVVQEPGQVFKPFLPSIIALCMEQVYPIIAERPSPDVKAELFELLFRTLHHNWRYFFKSTVLASVQRGIAEEQMENEPQFSAIMQAFGQSFLQPDIHLFKQNLFYLETLNTKQKLYHKKIFRTAMLFQFVNVLLQVLVHKSHDLLQEEIGIAIYNMASVDFDGFFAAFLPEFLTSCDGVDANQKSVLGRNFKMDRDLPSFTQNVHRLVNDLRYYRLCNDSLPPGTVKL.

Ala2 carries the N-acetylalanine modification. Positions 31–97 constitute an Importin N-terminal domain; sequence IEELLNNFAQ…RSCLPKLLLA (67 aa). A Phosphoserine modification is found at Ser199. 2 positions are modified to phosphothreonine: Thr201 and Thr204. 2 positions are modified to phosphoserine: Ser208 and Ser224.

Belongs to the exportin family. In terms of assembly, found in a complex with XPO6, Ran, ACTB and PFN1. Interacts with ACTB. Interacts with ACTB in a RanGTP-dependent manner.

The protein resides in the nucleus. The protein localises to the cytoplasm. Functionally, mediates the nuclear export of actin and profilin-actin complexes in somatic cells. The sequence is that of Exportin-6 (XPO6) from Homo sapiens (Human).